A 349-amino-acid polypeptide reads, in one-letter code: Ferredoxin--NADP reductase 1 (349 aa).

FAD contacts are provided by Glu-36, Lys-44, Tyr-48, Val-88, Leu-123, Asp-290, and Ser-331.

The protein belongs to the ferredoxin--NADP reductase type 2 family. In terms of assembly, homodimer. FAD serves as cofactor.

The enzyme catalyses 2 reduced [2Fe-2S]-[ferredoxin] + NADP(+) + H(+) = 2 oxidized [2Fe-2S]-[ferredoxin] + NADPH. The protein is Ferredoxin--NADP reductase 1 of Lysinibacillus sphaericus (strain C3-41).